The chain runs to 173 residues: Shikimate kinase (173 aa).

Position 14–19 (14–19 (GAGKST)) interacts with ATP. S18 serves as a coordination point for Mg(2+). 3 residues coordinate substrate: D36, R60, and G82. K120 contacts ATP. A substrate-binding site is contributed by R140.

The protein belongs to the shikimate kinase family. Monomer. The cofactor is Mg(2+).

It localises to the cytoplasm. It carries out the reaction shikimate + ATP = 3-phosphoshikimate + ADP + H(+). It participates in metabolic intermediate biosynthesis; chorismate biosynthesis; chorismate from D-erythrose 4-phosphate and phosphoenolpyruvate: step 5/7. Catalyzes the specific phosphorylation of the 3-hydroxyl group of shikimic acid using ATP as a cosubstrate. The sequence is that of Shikimate kinase (aroK) from Wigglesworthia glossinidia brevipalpis.